The primary structure comprises 65 residues: Large ribosomal subunit protein uL29c (65 aa).

The protein belongs to the universal ribosomal protein uL29 family.

It is found in the plastid. The protein localises to the chloroplast. The sequence is that of Large ribosomal subunit protein uL29c (rpl29) from Guillardia theta (Cryptophyte).